The sequence spans 396 residues: Na(+)/H(+) antiporter NhaA 1 (396 aa).

11 helical membrane-spanning segments follow: residues 15 to 35 (AGIF…VGFL), 60 to 80 (LEFW…GLEL), 96 to 116 (FLPS…FAVI), 126 to 146 (GWAI…ALLG), 155 to 175 (IFVL…IALF), 179 to 199 (ALNF…LVMC), 207 to 227 (IPFV…GIHA), 255 to 275 (SLGY…NAGV), 290 to 312 (PLGV…SWFL), 329 to 349 (LYAV…VDNL), and 363 to 383 (LAIL…AKAV).

This sequence belongs to the NhaA Na(+)/H(+) (TC 2.A.33) antiporter family.

The protein resides in the cell inner membrane. The enzyme catalyses Na(+)(in) + 2 H(+)(out) = Na(+)(out) + 2 H(+)(in). Functionally, na(+)/H(+) antiporter that extrudes sodium in exchange for external protons. The protein is Na(+)/H(+) antiporter NhaA 1 of Campylobacter hominis (strain ATCC BAA-381 / DSM 21671 / CCUG 45161 / LMG 19568 / NCTC 13146 / CH001A).